The sequence spans 276 residues: MIVIGRSIVHPYITNEYEPFAAEKQQILSIMAGNQEIYSFRTSDELSFDLNLRVNIITSALELFQSGFQFRTFQQSFCNPQYWKRTSLGGFELLPNIPPSIAIQDIFKNGKLYGTECATAMIIIFYKALLSLYEKETFNRLFANLLLYTWDYDQDLKLITKTGGDLVPGDLVYFKNPQVNPATIEWQGENTIYLGNFFFYGHGVGVKTKEEIIYALNERRVPYAFISAFLTDTITRIDSRLMSYHASPNTPQTSIGFIPIRDDAIVATVGNTTTVY.

The protein belongs to the bacillus TGase family.

The enzyme catalyses L-glutaminyl-[protein] + L-lysyl-[protein] = [protein]-L-lysyl-N(6)-5-L-glutamyl-[protein] + NH4(+). In terms of biological role, probably plays a role in the assembly of the spore coat proteins by catalyzing epsilon-(gamma-glutamyl)lysine cross-links. In Bacillus cereus (strain AH820), this protein is Protein-glutamine gamma-glutamyltransferase.